The sequence spans 180 residues: NADH-quinone oxidoreductase subunit I (180 aa).

2 consecutive 4Fe-4S ferredoxin-type domains span residues 48–80 (IVLT…LQKA) and 90–119 (EFFR…LTPD). Residues Cys60, Cys63, Cys66, Cys70, Cys99, Cys102, Cys105, and Cys109 each contribute to the [4Fe-4S] cluster site.

It belongs to the complex I 23 kDa subunit family. NDH-1 is composed of 13 different subunits. Subunits NuoA, H, J, K, L, M, N constitute the membrane sector of the complex. Requires [4Fe-4S] cluster as cofactor.

It localises to the cell inner membrane. It catalyses the reaction a quinone + NADH + 5 H(+)(in) = a quinol + NAD(+) + 4 H(+)(out). In terms of biological role, NDH-1 shuttles electrons from NADH, via FMN and iron-sulfur (Fe-S) centers, to quinones in the respiratory chain. The immediate electron acceptor for the enzyme in this species is believed to be ubiquinone. Couples the redox reaction to proton translocation (for every two electrons transferred, four hydrogen ions are translocated across the cytoplasmic membrane), and thus conserves the redox energy in a proton gradient. The chain is NADH-quinone oxidoreductase subunit I from Erwinia tasmaniensis (strain DSM 17950 / CFBP 7177 / CIP 109463 / NCPPB 4357 / Et1/99).